Reading from the N-terminus, the 305-residue chain is Oligopeptide transport ATP-binding protein OppF (305 aa).

Positions 6-251 (LEIKHLKQHF…PLHPYTKSLL (246 aa)) constitute an ABC transporter domain. Position 42 to 49 (42 to 49 (GESGCGKS)) interacts with ATP.

It belongs to the ABC transporter superfamily. In terms of assembly, the complex is composed of two ATP-binding proteins (OppD and OppF), two transmembrane proteins (OppB and OppC) and a solute-binding protein (OppA).

It is found in the cell membrane. It catalyses the reaction a [peptide](out) + ATP + H2O = a [peptide](in) + ADP + phosphate + H(+). In terms of biological role, part of the ABC transporter complex OppABCDF involved in the uptake of oligopeptides. Probably responsible for energy coupling to the transport system. Required for genetic competence but not for peptide transport or for sporulation. The chain is Oligopeptide transport ATP-binding protein OppF from Bacillus subtilis (strain 168).